Reading from the N-terminus, the 214-residue chain is Large ribosomal subunit protein uL1 (214 aa).

It belongs to the universal ribosomal protein uL1 family. Part of the 50S ribosomal subunit.

Its function is as follows. Binds directly to 23S rRNA. Probably involved in E site tRNA release. In terms of biological role, protein L1 is also a translational repressor protein, it controls the translation of its operon by binding to its mRNA. This is Large ribosomal subunit protein uL1 from Methanoregula boonei (strain DSM 21154 / JCM 14090 / 6A8).